The following is a 300-amino-acid chain: ETS homologous factor (300 aa).

The region spanning 29 to 115 (PTCNVSSGFF…SNLQHLKWNG (87 aa)) is the PNT domain. Positions 181 to 203 (VAESPDMKKEQDHPVKSHTKKHN) are disordered. A compositionally biased stretch (basic and acidic residues) spans 185-195 (PDMKKEQDHPV). A DNA-binding region (ETS) is located at residues 207 to 289 (THLWEFIRDI…DGRRLVYKFG (83 aa)).

This sequence belongs to the ETS family. Highly expressed in kidney and lung, weakly in skeletal muscle, heart, and liver, and not detected in brain, spleen or testis.

The protein resides in the nucleus. Functionally, transcriptional activator that may play a role in regulating epithelial cell differentiation and proliferation. May act as a repressor for a specific subset of ETS/AP-1-responsive genes, and as a modulator of the nuclear response to mitogen-activated protein kinase signaling cascades. Binds to DNA sequences containing the consensus nucleotide core sequence GGAA. Involved in regulation of TNFRSF10B/DR5 expression through Ets-binding sequences on the TNFRSF10B/DR5 promoter. In Mus musculus (Mouse), this protein is ETS homologous factor.